A 221-amino-acid polypeptide reads, in one-letter code: MNEDPQKKDEPFFKDVEFKASYGEANQIPSQGIPQIAFAGRSNAGKSSLLNAILERKSLAKVSSTPGKTKLLNFFFVNRSIYLVDLPGFGYSANSHKDHEAMMDLLMDYLNLAKDLKCLFLVCDSQRELPEEELELIGTCFERNIKPVLVRTKIDKLNQSDLSKLRKKMKNIHELYPMLETVLVSNKSGKGLPELRKIVDSLITTVGTLVEGNTKKIEGIS.

The 174-residue stretch at 32–205 (GIPQIAFAGR…RKIVDSLITT (174 aa)) folds into the EngB-type G domain. GTP is bound by residues 40–47 (GRSNAGKS), 67–71 (GKTKL), 85–88 (DLPG), 152–155 (TKID), and 184–186 (VSN). Positions 47 and 69 each coordinate Mg(2+).

This sequence belongs to the TRAFAC class TrmE-Era-EngA-EngB-Septin-like GTPase superfamily. EngB GTPase family. It depends on Mg(2+) as a cofactor.

Its function is as follows. Necessary for normal cell division and for the maintenance of normal septation. The sequence is that of Probable GTP-binding protein EngB from Leptospira borgpetersenii serovar Hardjo-bovis (strain JB197).